Consider the following 360-residue polypeptide: GTP 3',8-cyclase (360 aa).

Residues 33–251 (RFGRSATDLR…LQPHFRLRPD (219 aa)) enclose the Radical SAM core domain. R42 is a binding site for GTP. [4Fe-4S] cluster contacts are provided by C49 and C53. An S-adenosyl-L-methionine-binding site is contributed by Y55. C56 is a [4Fe-4S] cluster binding site. R93 provides a ligand contact to GTP. G97 is an S-adenosyl-L-methionine binding site. A GTP-binding site is contributed by T124. S148 is a binding site for S-adenosyl-L-methionine. K185 provides a ligand contact to GTP. Position 219 (M219) interacts with S-adenosyl-L-methionine. Residues C287 and C290 each contribute to the [4Fe-4S] cluster site. Position 292-294 (292-294 (RTR)) interacts with GTP. C304 serves as a coordination point for [4Fe-4S] cluster.

The protein belongs to the radical SAM superfamily. MoaA family. In terms of assembly, monomer and homodimer. Requires [4Fe-4S] cluster as cofactor.

The enzyme catalyses GTP + AH2 + S-adenosyl-L-methionine = (8S)-3',8-cyclo-7,8-dihydroguanosine 5'-triphosphate + 5'-deoxyadenosine + L-methionine + A + H(+). The protein operates within cofactor biosynthesis; molybdopterin biosynthesis. Its function is as follows. Catalyzes the cyclization of GTP to (8S)-3',8-cyclo-7,8-dihydroguanosine 5'-triphosphate. This chain is GTP 3',8-cyclase, found in Mycobacterium marinum (strain ATCC BAA-535 / M).